We begin with the raw amino-acid sequence, 662 residues long: PsbB mRNA maturation factor Mbb1, chloroplastic (662 aa).

A chloroplast-targeting transit peptide spans 1–50 (MSLVPFSQLWRGVRTRGPVEQASSSSSSSSSSRRTWYAPARSQTGVQVAA). Disordered stretches follow at residues 14–38 (RTRG…TWYA) and 75–101 (IIAD…RDEA). Residues 23–32 (SSSSSSSSSS) are compositionally biased toward low complexity. Basic and acidic residues predominate over residues 88-101 (EGERGDATGSRDEA). TPR repeat units follow at residues 126-160 (SRIR…DPAD), 161-194 (PRAY…TGNV), 196-229 (PYIW…DGTH), 231-263 (CAWH…CRRK), 269-302 (AYLY…AEGA), 305-338 (VALW…NPRS), 339-372 (RYVH…NPTD), 373-406 (PALY…DPSD), 408-440 (YMWQ…DPRS), and 444-477 (VYVF…DPKS). 2 disordered regions span residues 540–563 (SDGN…EAAA) and 598–662 (LPDF…RSMG).

As to quaternary structure, part of a 300 kDa complex that associates with RNA.

Its subcellular location is the plastid. It localises to the chloroplast stroma. Involved, directly or indirectly, in the processing of the chloroplast encoded psbB mRNA to its mature form, acting via the 5'-UTR of the psbB mRNA. The polypeptide is PsbB mRNA maturation factor Mbb1, chloroplastic (MBB1) (Chlamydomonas reinhardtii (Chlamydomonas smithii)).